The following is a 150-amino-acid chain: Phosphoribosyl-AMP cyclohydrolase (150 aa).

Aspartate 93 is a binding site for Mg(2+). Cysteine 94 provides a ligand contact to Zn(2+). Residues aspartate 95 and aspartate 97 each coordinate Mg(2+). Zn(2+)-binding residues include cysteine 112 and cysteine 119.

This sequence belongs to the PRA-CH family. Homodimer. Mg(2+) serves as cofactor. Requires Zn(2+) as cofactor.

It is found in the cytoplasm. It catalyses the reaction 1-(5-phospho-beta-D-ribosyl)-5'-AMP + H2O = 1-(5-phospho-beta-D-ribosyl)-5-[(5-phospho-beta-D-ribosylamino)methylideneamino]imidazole-4-carboxamide. The protein operates within amino-acid biosynthesis; L-histidine biosynthesis; L-histidine from 5-phospho-alpha-D-ribose 1-diphosphate: step 3/9. Its function is as follows. Catalyzes the hydrolysis of the adenine ring of phosphoribosyl-AMP. This is Phosphoribosyl-AMP cyclohydrolase from Rhizobium etli (strain CIAT 652).